Consider the following 70-residue polypeptide: Small, acid-soluble spore protein 1 (70 aa).

It belongs to the alpha/beta-type SASP family.

SASP are bound to spore DNA. They are double-stranded DNA-binding proteins that cause DNA to change to an a-like conformation. They protect the DNA backbone from chemical and enzymatic cleavage and are thus involved in dormant spore's high resistance to UV light. This is Small, acid-soluble spore protein 1 (sasP-1) from Bacillus cereus.